A 347-amino-acid polypeptide reads, in one-letter code: NADH-ubiquinone oxidoreductase chain 2 (347 aa).

Helical transmembrane passes span 3 to 23 (PLIF…VMIS), 25 to 45 (HWLM…PVLM), 59 to 79 (YFLT…INLL), 96 to 116 (IIMT…FWVP), 122 to 142 (VSLT…LSVL), 145 to 165 (IAPV…IMIG), 178 to 198 (ILAY…IFNP), 202 to 222 (LLNL…FMTV), 240 to 260 (ITTS…LTGF), 276 to 296 (IILA…YMRL), and 326 to 346 (LSPL…MMIL).

It belongs to the complex I subunit 2 family. As to quaternary structure, core subunit of respiratory chain NADH dehydrogenase (Complex I) which is composed of 45 different subunits. Interacts with TMEM242.

It is found in the mitochondrion inner membrane. The enzyme catalyses a ubiquinone + NADH + 5 H(+)(in) = a ubiquinol + NAD(+) + 4 H(+)(out). Core subunit of the mitochondrial membrane respiratory chain NADH dehydrogenase (Complex I) which catalyzes electron transfer from NADH through the respiratory chain, using ubiquinone as an electron acceptor. Essential for the catalytic activity and assembly of complex I. This chain is NADH-ubiquinone oxidoreductase chain 2, found in Peropteryx macrotis (Lesser dog-like bat).